Here is a 124-residue protein sequence, read N- to C-terminus: Small ribosomal subunit protein uS12c (124 aa).

Disordered stretches follow at residues 1–28 and 104–124; these read MPTIQQLVRSERHKSSKKTKSPALKGCP and ASGVKDRKKSRSKYGAKQPKT. 2 stretches are compositionally biased toward basic residues: residues 11–20 and 109–124; these read ERHKSSKKTK and DRKKSRSKYGAKQPKT.

The protein belongs to the universal ribosomal protein uS12 family. In terms of assembly, part of the 30S ribosomal subunit.

Its subcellular location is the plastid. It is found in the chloroplast. Functionally, with S4 and S5 plays an important role in translational accuracy. Located at the interface of the 30S and 50S subunits. This is Small ribosomal subunit protein uS12c (rps12) from Gracilaria tenuistipitata var. liui (Red alga).